Here is a 34-residue protein sequence, read N- to C-terminus: N(4)-(Beta-N-acetylglucosaminyl)-L-asparaginase (34 aa).

Threonine 18 serves as the catalytic Nucleophile.

Belongs to the Ntn-hydrolase family. As to quaternary structure, heterotetramer of two alpha and two beta chains arranged as a dimer of alpha/beta heterodimers. Post-translationally, cleaved into an alpha and beta chain by autocatalysis; this activates the enzyme. The N-terminal residue of the beta subunit is responsible for the nucleophile hydrolase activity. N-glycosylated.

Its subcellular location is the lysosome. The enzyme catalyses N(4)-(beta-N-acetyl-D-glucosaminyl)-L-asparagine + H2O = N-acetyl-beta-D-glucosaminylamine + L-aspartate + H(+). Functionally, cleaves the GlcNAc-Asn bond which joins oligosaccharides to the peptide of asparagine-linked glycoproteins. The protein is N(4)-(Beta-N-acetylglucosaminyl)-L-asparaginase (AGA) of Sus scrofa (Pig).